The sequence spans 570 residues: Molecular chaperone MKKS (570 aa).

Residue 192 to 199 (GHIILGKS) participates in ATP binding. The interval 198–370 (KSLIVPLKGQ…FHLIPNEATI (173 aa)) is substrate-binding apical domain.

This sequence belongs to the TCP-1 chaperonin family. Component of a complex composed at least of MKKS, BBS10, BBS12, TCP1, CCT2, CCT3, CCT4, CCT5 and CCT8. Interacts with STUB1. Interacts with BBS2 (via coiled coil domain). Interacts with CCDC28B. Interacts with BBS12. Interacts with SMARCC1, a component of the SWI/SNF complexes; the interaction takes place predominantly in the cytoplasm and may modulate SMARCC1 location. Interacts with DLEC1. As to expression, widely expressed in adult and fetal tissues.

Its subcellular location is the cytoplasm. It localises to the cytoskeleton. It is found in the microtubule organizing center. The protein resides in the centrosome. The protein localises to the cytosol. Its subcellular location is the nucleus. In terms of biological role, probable molecular chaperone that assists the folding of proteins upon ATP hydrolysis. Plays a role in the assembly of BBSome, a complex involved in ciliogenesis regulating transports vesicles to the cilia. May play a role in protein processing in limb, cardiac and reproductive system development. May play a role in cytokinesis. In Homo sapiens (Human), this protein is Molecular chaperone MKKS.